Here is a 397-residue protein sequence, read N- to C-terminus: ORC1-type DNA replication protein 1 (397 aa).

ATP contacts are provided by residues 67-71 (TGKTA), Tyr-208, and Arg-220.

The protein belongs to the CDC6/cdc18 family.

Involved in regulation of DNA replication. The chain is ORC1-type DNA replication protein 1 (cdc6-1) from Sulfolobus acidocaldarius (strain ATCC 33909 / DSM 639 / JCM 8929 / NBRC 15157 / NCIMB 11770).